The sequence spans 47 residues: Large ribosomal subunit protein eL40 (47 aa).

The protein belongs to the eukaryotic ribosomal protein eL40 family.

This chain is Large ribosomal subunit protein eL40, found in Methanococcus aeolicus (strain ATCC BAA-1280 / DSM 17508 / OCM 812 / Nankai-3).